A 122-amino-acid chain; its full sequence is Large ribosomal subunit protein uL14 (122 aa).

Belongs to the universal ribosomal protein uL14 family. Part of the 50S ribosomal subunit. Forms a cluster with proteins L3 and L19. In the 70S ribosome, L14 and L19 interact and together make contacts with the 16S rRNA in bridges B5 and B8.

Functionally, binds to 23S rRNA. Forms part of two intersubunit bridges in the 70S ribosome. The polypeptide is Large ribosomal subunit protein uL14 (Xanthomonas axonopodis pv. citri (strain 306)).